The chain runs to 419 residues: Synaptosomal-associated protein 47 (419 aa).

T-SNARE coiled-coil homology domains follow at residues proline 108 to leucine 170 and valine 356 to leucine 418.

Belongs to the SVAP1 family.

Functionally, may play a role in intracellular membrane fusion. The protein is Synaptosomal-associated protein 47 (snap47) of Danio rerio (Zebrafish).